The following is an 875-amino-acid chain: MGRAGGGSGDGGEEPAALEAVRSFERWKKKYSRRTRRLRLQRKERERPEWQVEREGIGRLVQRYPQINANEIQRFSDFPLSKKTLKGLQEAQYRMVTEIQRQTIGLALQGKDVLGAAKTGSGKTLAFIVPALELLYRLQWTSADGLGVLIISPTRELAFQTFKVLRKVGKNHDFSAGLIIGGKDLKEESERIHHINMLICTPGRLLQHMDETSYFYASDLQMLILDEADRILDMGFADTMNAIIENLPKKRQTLLFSATQTKSVKDLARLSLKDPEYVWVHEKAKFSTPATLDQNYIVCELQHKINVLYSFLRSHLKKKSIVFFASCKEVQYLFRVFCKLQPGLPVLALHGKQQQMKRMEVYTCFVRKKAAVLFATDIAARGLDFPAVNWVIQFDCPEDANTYIHRVGRTARYKEGGEALLVLLPSEEKGMVEQLAQRKVPVNEIKINPEKITDIQKRMQAFLAQDQELKEKAQRCFVSYLRSVYLMKNKEVFDVFKLPLAEYALSLGLAMAPRVRFLQKVQKQLSVKETSERNPLKDTEQNKNTISSLNKEGMEECRINPSGKLSVNRSKEEENRKETEQYPPSSEGTEESGSECESKEASEEEEKEGALSSRVPYTNSMQFFEDDDDDDDTKDLDLLTVKRRDVFDLESKDSPALNASNSKMKKKTTKTQEAKKILKKKFKVNTRIVFTEDGELVQQWPPVQKSGLAKADEEDDASGINLDKVREILREEDKFDKEEYRKKIKEKHREKRLKEKAARREARNKNARAEGETVAVLAHSGSEDEFDPSTLPDPDKYKDSDEEQDTESEDSYRELEEKSGRKRRSHGGSIAAGEMPQKRKKAKFSQEEDPFLPLDTGLSLAEDEELVLHLLKSHS.

A Q motif motif is present at residues Q73–R101. ATP contacts are provided by residues Y93–M95, Q100, and A117–T124. Residues I104–V278 enclose the Helicase ATP-binding domain. Positions D226–D229 match the DEAD box motif. Residues T291 to T453 enclose the Helicase C-terminal domain. 3 disordered regions span residues K528–T633, D653–Q672, and K743–T856. Composition is skewed to basic and acidic residues over residues E529–Q541 and R569–E580. Acidic residues predominate over residues F624–T633. A coiled-coil region spans residues D736–T773. The segment covering R752–G771 has biased composition (basic and acidic residues). Positions S800 to E809 are enriched in acidic residues. Positions D810 to S819 are enriched in basic and acidic residues.

It belongs to the DEAD box helicase family. DDX10/DBP4 subfamily.

It carries out the reaction ATP + H2O = ADP + phosphate + H(+). In terms of biological role, putative ATP-dependent RNA helicase. The polypeptide is Probable ATP-dependent RNA helicase DDX10 (DDX10) (Gallus gallus (Chicken)).